We begin with the raw amino-acid sequence, 195 residues long: Peptidyl-tRNA hydrolase (195 aa).

Tyr18 lines the tRNA pocket. Catalysis depends on His23, which acts as the Proton acceptor. TRNA is bound by residues Phe69, Asn71, and Asn117.

It belongs to the PTH family. In terms of assembly, monomer.

It localises to the cytoplasm. It carries out the reaction an N-acyl-L-alpha-aminoacyl-tRNA + H2O = an N-acyl-L-amino acid + a tRNA + H(+). In terms of biological role, hydrolyzes ribosome-free peptidyl-tRNAs (with 1 or more amino acids incorporated), which drop off the ribosome during protein synthesis, or as a result of ribosome stalling. Catalyzes the release of premature peptidyl moieties from peptidyl-tRNA molecules trapped in stalled 50S ribosomal subunits, and thus maintains levels of free tRNAs and 50S ribosomes. The protein is Peptidyl-tRNA hydrolase of Alcanivorax borkumensis (strain ATCC 700651 / DSM 11573 / NCIMB 13689 / SK2).